The sequence spans 966 residues: C4 phosphoenolpyruvate carboxylase (966 aa).

Residue serine 11 is modified to Phosphoserine. Histidine 172 is a catalytic residue. Residues tryptophan 283, arginine 450, and aspartate 597 each contribute to the D-glucose 6-phosphate site. Lysine 600 is a catalytic residue. D-glucose 6-phosphate is bound at residue arginine 635. Arginine 641 is a catalytic residue. Residue arginine 641 coordinates L-aspartate. A D-glucose 6-phosphate-binding site is contributed by threonine 665. Glutamine 673 is an L-aspartate binding site. D-glucose 6-phosphate contacts are provided by residues arginine 753 and 767 to 769 (RAI). The L-aspartate site is built by lysine 829, arginine 888, and asparagine 964.

It belongs to the PEPCase type 1 family. In terms of assembly, homotetramer. Mg(2+) serves as cofactor. As to expression, expressed in mesophyll cells, but not in bundle-sheath, roots, stems and flowers.

Its subcellular location is the cytoplasm. It carries out the reaction oxaloacetate + phosphate = phosphoenolpyruvate + hydrogencarbonate. The protein operates within photosynthesis; C4 acid pathway. With respect to regulation, 5 fold activation by the allosteric regulator glucose-6-phosphate. Low sensitivity to inhibition by L-malate and L-aspartate. Up-regulated by light-reversible phosphorylation. Forms oxaloacetate through the carboxylation of phosphoenolpyruvate (PEP). Catalyzes the first step of C4 photosynthesis. This is C4 phosphoenolpyruvate carboxylase from Flaveria trinervia (Clustered yellowtops).